The following is a 69-amino-acid chain: MSLELFNQLEQKVQNAVETIEMLKMEAEELREENTRLKQERDEWERRLNGLLGKFQEIEDGNGETSQTP.

A coiled-coil region spans residues leucine 3–aspartate 60.

Belongs to the ZapB family. As to quaternary structure, homodimer. The ends of the coiled-coil dimer bind to each other, forming polymers. Interacts with FtsZ.

It is found in the cytoplasm. Functionally, non-essential, abundant cell division factor that is required for proper Z-ring formation. It is recruited early to the divisome by direct interaction with FtsZ, stimulating Z-ring assembly and thereby promoting cell division earlier in the cell cycle. Its recruitment to the Z-ring requires functional FtsA or ZipA. The chain is Cell division protein ZapB from Chromohalobacter salexigens (strain ATCC BAA-138 / DSM 3043 / CIP 106854 / NCIMB 13768 / 1H11).